Consider the following 301-residue polypeptide: Protoheme IX farnesyltransferase 2 (301 aa).

9 helical membrane passes run 29 to 49, 51 to 71, 101 to 121, 123 to 143, 150 to 170, 177 to 197, 223 to 243, 244 to 264, and 281 to 301; these read VVALMLLTVLVGMCLAVPTAV, VQPLIAGMFGIALMAGSAAAL, ALIFAASIGGLGFVVLYVLVN, LTAWLTFASLIGYALVYTAYL, NIVIGGLAGAMPPLLGWTAVT, ALLLVIIIFTWTPPHFWALAI, CILLYTVLLAIACLLPVLVGM, CGPMYFVCSSLLSSVFIYKAW, and FSIYHLMLLFMALLIDHYLWS.

This sequence belongs to the UbiA prenyltransferase family. Protoheme IX farnesyltransferase subfamily.

Its subcellular location is the cell inner membrane. The catalysed reaction is heme b + (2E,6E)-farnesyl diphosphate + H2O = Fe(II)-heme o + diphosphate. Its pathway is porphyrin-containing compound metabolism; heme O biosynthesis; heme O from protoheme: step 1/1. Converts heme B (protoheme IX) to heme O by substitution of the vinyl group on carbon 2 of heme B porphyrin ring with a hydroxyethyl farnesyl side group. This is Protoheme IX farnesyltransferase 2 from Shewanella sp. (strain W3-18-1).